A 181-amino-acid chain; its full sequence is ATP synthase subunit delta (181 aa).

Belongs to the ATPase delta chain family. F-type ATPases have 2 components, F(1) - the catalytic core - and F(0) - the membrane proton channel. F(1) has five subunits: alpha(3), beta(3), gamma(1), delta(1), epsilon(1). F(0) has three main subunits: a(1), b(2) and c(10-14). The alpha and beta chains form an alternating ring which encloses part of the gamma chain. F(1) is attached to F(0) by a central stalk formed by the gamma and epsilon chains, while a peripheral stalk is formed by the delta and b chains.

The protein localises to the cell membrane. Its function is as follows. F(1)F(0) ATP synthase produces ATP from ADP in the presence of a proton or sodium gradient. F-type ATPases consist of two structural domains, F(1) containing the extramembraneous catalytic core and F(0) containing the membrane proton channel, linked together by a central stalk and a peripheral stalk. During catalysis, ATP synthesis in the catalytic domain of F(1) is coupled via a rotary mechanism of the central stalk subunits to proton translocation. In terms of biological role, this protein is part of the stalk that links CF(0) to CF(1). It either transmits conformational changes from CF(0) to CF(1) or is implicated in proton conduction. In Clostridioides difficile (strain 630) (Peptoclostridium difficile), this protein is ATP synthase subunit delta.